The sequence spans 332 residues: 5-dehydro-2-deoxygluconokinase 2 (332 aa).

The protein belongs to the carbohydrate kinase PfkB family.

The catalysed reaction is 5-dehydro-2-deoxy-D-gluconate + ATP = 6-phospho-5-dehydro-2-deoxy-D-gluconate + ADP + H(+). It participates in polyol metabolism; myo-inositol degradation into acetyl-CoA; acetyl-CoA from myo-inositol: step 5/7. Catalyzes the phosphorylation of 5-dehydro-2-deoxy-D-gluconate (2-deoxy-5-keto-D-gluconate or DKG) to 6-phospho-5-dehydro-2-deoxy-D-gluconate (DKGP). This chain is 5-dehydro-2-deoxygluconokinase 2, found in Bacillus cereus (strain ZK / E33L).